Reading from the N-terminus, the 432-residue chain is Pachytene checkpoint protein 2 homolog (432 aa).

An N-acetylmethionine modification is found at Met1. Position 179–186 (179–186 (GPPGTGKT)) interacts with ATP.

This sequence belongs to the AAA ATPase family. PCH2 subfamily. As to quaternary structure, specifically interacts with the ligand binding domain of the thyroid receptor (TR). This interaction does not require the presence of thyroid hormone for its interaction. Interacts with proteasome subunit PSMA8; to participate in meiosis progression during spermatogenesis. Widely expressed, including in testis.

Plays a key role in chromosome recombination and chromosome structure development during meiosis. Required at early steps in meiotic recombination that leads to non-crossovers pathways. Also needed for efficient completion of homologous synapsis by influencing crossover distribution along the chromosomes affecting both crossovers and non-crossovers pathways. Also required for development of higher-order chromosome structures and is needed for synaptonemal-complex formation. In males, required for efficient synapsis of the sex chromosomes and for sex body formation. Promotes early steps of the DNA double-strand breaks (DSBs) repair process upstream of the assembly of RAD51 complexes. Required for depletion of HORMAD1 and HORMAD2 from synapsed chromosomes. Plays a role in mitotic spindle assembly checkpoint (SAC) activation. This Mus musculus (Mouse) protein is Pachytene checkpoint protein 2 homolog (Trip13).